A 181-amino-acid chain; its full sequence is ADP-ribosylation factor 2-A (181 aa).

G2 carries N-myristoyl glycine lipidation. GTP-binding positions include 24-31 (GLDAAGKT), 67-71 (DVGGQ), and 126-129 (NKQD).

The protein belongs to the small GTPase superfamily. Arf family.

It is found in the golgi apparatus. With respect to regulation, activated by AGD10. Functionally, GTP-binding protein involved in protein trafficking; may modulate vesicle budding and uncoating within the Golgi apparatus. The chain is ADP-ribosylation factor 2-A (ARF2-A) from Arabidopsis thaliana (Mouse-ear cress).